Here is a 77-residue protein sequence, read N- to C-terminus: Conotoxin Mr8.2 (77 aa).

The signal sequence occupies residues 1–16; the sequence is MLRLITAAVLVSACLA. The propeptide occupies 17–32; it reads YPQKKRTPPQTRPTSR.

This sequence belongs to the conotoxin B2 family. In terms of processing, contains 5 disulfide bonds. As to expression, expressed by the venom duct.

Its subcellular location is the secreted. This Conus marmoreus (Marble cone) protein is Conotoxin Mr8.2.